The sequence spans 1176 residues: Nitrite reductase [NAD(P)H] (1176 aa).

Residues 1 to 23 (MANTSLDMASSTSPSPSPESTTT) are disordered. Residues 10–23 (SSTSPSPSPESTTT) are compositionally biased toward low complexity. Position 26-60 (26-60 (KRIVVVGLGMVGIAFIEKLIKLDTQRQYEIVVIGE)) interacts with FAD. Residue 183-215 (STGVVVGGGLLGLEAAKALMDLQVFGRVVVIER) participates in NAD(+) binding. Positions 496, 498, 531, and 534 each coordinate [2Fe-2S] cluster. [4Fe-4S] cluster contacts are provided by cysteine 717, cysteine 723, cysteine 757, and cysteine 761. Siroheme is bound at residue cysteine 761. The Rieske; atypical domain maps to 942–1094 (SYFQGADDLP…VEERDDGMVY (153 aa)). Cysteine 981 and histidine 983 together coordinate [2Fe-2S] cluster. 2 stretches are compositionally biased toward low complexity: residues 998–1008 (PSPSSCSSSAL) and 1030–1049 (PTSS…TNPS). The interval 998-1051 (PSPSSCSSSALPPSPPSTPPRSSSPVTSPPQSPTSSATPATTASSSCTTNPSGP) is disordered. [2Fe-2S] cluster is bound by residues cysteine 1058 and histidine 1061. Basic and acidic residues predominate over residues 1124–1139 (LRELDELNKSKGVEGK). Residues 1124–1157 (LRELDELNKSKGVEGKKGRRGRKPGASEAGKEVG) are disordered.

It belongs to the nitrite and sulfite reductase 4Fe-4S domain family. In terms of assembly, homodimer. Requires siroheme as cofactor. [4Fe-4S] cluster serves as cofactor. It depends on FAD as a cofactor. The cofactor is [2Fe-2S] cluster.

It catalyses the reaction NH4(+) + 3 NADP(+) + 2 H2O = nitrite + 3 NADPH + 5 H(+). It carries out the reaction NH4(+) + 3 NAD(+) + 2 H2O = nitrite + 3 NADH + 5 H(+). It participates in nitrogen metabolism; nitrate reduction (assimilation). The polypeptide is Nitrite reductase [NAD(P)H] (nit-6) (Neurospora crassa (strain ATCC 24698 / 74-OR23-1A / CBS 708.71 / DSM 1257 / FGSC 987)).